The sequence spans 418 residues: UPF0261 protein BMEII0128 (418 aa).

The protein belongs to the UPF0261 family.

The chain is UPF0261 protein BMEII0128 from Brucella melitensis biotype 1 (strain ATCC 23456 / CCUG 17765 / NCTC 10094 / 16M).